The primary structure comprises 358 residues: Ribosomal RNA large subunit methyltransferase M (358 aa).

S-adenosyl-L-methionine is bound by residues serine 183, 216 to 219, aspartate 235, aspartate 255, and aspartate 271; that span reads APGG. Lysine 300 acts as the Proton acceptor in catalysis.

Belongs to the class I-like SAM-binding methyltransferase superfamily. RNA methyltransferase RlmE family. RlmM subfamily. In terms of assembly, monomer.

It is found in the cytoplasm. It catalyses the reaction cytidine(2498) in 23S rRNA + S-adenosyl-L-methionine = 2'-O-methylcytidine(2498) in 23S rRNA + S-adenosyl-L-homocysteine + H(+). In terms of biological role, catalyzes the 2'-O-methylation at nucleotide C2498 in 23S rRNA. This chain is Ribosomal RNA large subunit methyltransferase M, found in Pseudomonas fluorescens (strain SBW25).